A 406-amino-acid polypeptide reads, in one-letter code: Phosphopentomutase (406 aa).

Mn(2+) is bound by residues Asp-10, Asp-305, His-310, Asp-346, His-347, and His-358.

It belongs to the phosphopentomutase family. It depends on Mn(2+) as a cofactor.

The protein localises to the cytoplasm. It carries out the reaction 2-deoxy-alpha-D-ribose 1-phosphate = 2-deoxy-D-ribose 5-phosphate. The enzyme catalyses alpha-D-ribose 1-phosphate = D-ribose 5-phosphate. Its pathway is carbohydrate degradation; 2-deoxy-D-ribose 1-phosphate degradation; D-glyceraldehyde 3-phosphate and acetaldehyde from 2-deoxy-alpha-D-ribose 1-phosphate: step 1/2. In terms of biological role, isomerase that catalyzes the conversion of deoxy-ribose 1-phosphate (dRib-1-P) and ribose 1-phosphate (Rib-1-P) to deoxy-ribose 5-phosphate (dRib-5-P) and ribose 5-phosphate (Rib-5-P), respectively. This Agrobacterium fabrum (strain C58 / ATCC 33970) (Agrobacterium tumefaciens (strain C58)) protein is Phosphopentomutase.